Reading from the N-terminus, the 542-residue chain is Chaperonin GroEL (542 aa).

Residues 29–32, 86–90, Gly-413, 476–478, and Asp-492 each bind ATP; these read TLGP, DGTTT, and NAA.

The protein belongs to the chaperonin (HSP60) family. In terms of assembly, forms a cylinder of 14 subunits composed of two heptameric rings stacked back-to-back. Interacts with the co-chaperonin GroES.

It localises to the cytoplasm. It carries out the reaction ATP + H2O + a folded polypeptide = ADP + phosphate + an unfolded polypeptide.. In terms of biological role, together with its co-chaperonin GroES, plays an essential role in assisting protein folding. The GroEL-GroES system forms a nano-cage that allows encapsulation of the non-native substrate proteins and provides a physical environment optimized to promote and accelerate protein folding. This Lactococcus lactis subsp. cremoris (strain SK11) protein is Chaperonin GroEL.